Reading from the N-terminus, the 138-residue chain is Cysteine desulfuration protein SufE (138 aa).

The active-site Cysteine persulfide intermediate is Cys51.

It belongs to the SufE family. In terms of assembly, homodimer. Interacts with SufS.

The protein resides in the cytoplasm. The protein operates within cofactor biosynthesis; iron-sulfur cluster biosynthesis. In terms of biological role, participates in cysteine desulfuration mediated by SufS. Cysteine desulfuration mobilizes sulfur from L-cysteine to yield L-alanine and constitutes an essential step in sulfur metabolism for biosynthesis of a variety of sulfur-containing biomolecules. Functions as a sulfur acceptor for SufS, by mediating the direct transfer of the sulfur atom from the S-sulfanylcysteine of SufS, an intermediate product of cysteine desulfuration process. This is Cysteine desulfuration protein SufE from Escherichia coli O6:K15:H31 (strain 536 / UPEC).